The primary structure comprises 1904 residues: Voltage-dependent calcium channel type A subunit alpha-1 (1904 aa).

A disordered region spans residues 1-45 (MLGGVGGRHMSTRRRGSSPLVRGGAGLTGYAGPGASGNSNDVAAI). Positions 23–35 (GGAGLTGYAGPGA) are enriched in gly residues. Topologically, residues 30–168 (YAGPGASGNS…KHTRFIIEWP (139 aa)) are cytoplasmic. One copy of the I repeat lies at 155-447 (NCIRKHTRFI…LVLGVLSGEF (293 aa)). The helical transmembrane segment at 169–187 (PFEYAVLLTIIANCVVLAL) threads the bilayer. Residues 188-205 (EEHLPKQDKTILAQKLEA) are Extracellular-facing. Residues 206–225 (TEIYFLGIFCVEASLKILAL) form a helical membrane-spanning segment. Topologically, residues 226–237 (GFVLHRGSYLRN) are cytoplasmic. The chain crosses the membrane as a helical span at residues 238 to 259 (IWNIMDFFVVVTGFITAFSQGI). The Extracellular portion of the chain corresponds to 260–264 (ELDMD). The chain crosses the membrane as a helical span at residues 265 to 283 (LRTLRAIRVLRPLKLVSGI). Over 284–302 (PSLQVVLKSIIKAMAPLLQ) the chain is Cytoplasmic. A helical membrane pass occupies residues 303–322 (IGLLVLFAIVIFAIIGLEFY). Over 323–419 (SGTLHKTCYS…WTNDALGSTY (97 aa)) the chain is Extracellular. Residues N353 and N367 are each glycosylated (N-linked (GlcNAc...) asparagine). A helical membrane pass occupies residues 420-444 (NWIYFIPLIVLGSFFMLNLVLGVLS). The Cytoplasmic portion of the chain corresponds to 445-568 (GEFAKEREKV…YWIRKSVKSQ (124 aa)). A disordered region spans residues 513-543 (KKLGKSKSTDTEEEEGDDDQDDGELSSSTKE). The span at 523 to 536 (TEEEEGDDDQDDGE) shows a compositional bias: acidic residues. The stretch at 554 to 797 (EKRFRYWIRK…VFLAIAVDNL (244 aa)) is one II repeat. Residues 569 to 587 (KFYWFVIVLVFFNTVCVAV) traverse the membrane as a helical segment. Topologically, residues 588-602 (EHYGQPQWLTDFLYF) are extracellular. The helical transmembrane segment at 603-622 (AEFVFLALFMLEMFIKVYAL) threads the bilayer. The Cytoplasmic portion of the chain corresponds to 623–630 (GPRTYFDS). The helical transmembrane segment at 631–649 (SFNRFDCVVISGSIFEVIW) threads the bilayer. The Extracellular portion of the chain corresponds to 650-658 (SEVKSGSFG). Residues 659–677 (LSVLRALRLLRIFKVTKYW) form a helical membrane-spanning segment. Residues 678–696 (KSLRNLVISLLSSMRSIIS) are Cytoplasmic-facing. Residues 697 to 716 (LLFLLFLFILIFALLGMQLF) form a helical membrane-spanning segment. The Extracellular segment spans residues 717 to 769 (GGQFNFDSGTPPTNFNTFPIALLTVFQILTGEDWNEVMYQGIESQGGHKKGMI). The chain crosses the membrane as a helical span at residues 770 to 794 (YSLYFIVLVLFGNYTLLNVFLAIAV). Topologically, residues 795–895 (DNLANAQELS…VRRAAHWVVN (101 aa)) are cytoplasmic. The interval 827-869 (QSLQNPKDGGAPKVEICPPNGKGGKQSSEEEKKQDEDDDTGPK) is disordered. Residues 890–1177 (AHWVVNLRYF…IITFQEQGEA (288 aa)) form an III repeat. The chain crosses the membrane as a helical span at residues 896–914 (LRYFDFFIMVVISLSSIAL). The Extracellular segment spans residues 915–930 (AAEDPVWEDSPRNEVL). The helical transmembrane segment at 931–950 (NYFDYAFTGVFTVEMILKII) threads the bilayer. Over 951-962 (DLGIILHPGSYL) the chain is Cytoplasmic. The chain crosses the membrane as a helical span at residues 963–981 (REFWNIMDAVVVICAAVSF). The Extracellular segment spans residues 982 to 994 (AFDMTGSSAGQNL). N993 carries an N-linked (GlcNAc...) asparagine glycan. Residues 995-1013 (STIKSLRVLRVLRPLKTIK) traverse the membrane as a helical segment. The Cytoplasmic segment spans residues 1014-1032 (RVPKLKAVFDCVVNSLKNV). Residues 1033-1052 (INILIVYILFQFIFAVIAVQ) traverse the membrane as a helical segment. Residues 1053–1141 (LFNGKFFYCS…EDKGPIQNFR (89 aa)) lie on the Extracellular side of the membrane. The helical transmembrane segment at 1142–1166 (IEMSIFYIVYFIVFPFFFVNIFVAL) threads the bilayer. Topologically, residues 1167 to 1221 (IIITFQEQGEAELQDGEIDKNQKSCIDFTIQARPLERYMPKERNSVKYKIWRIVV) are cytoplasmic. An IV repeat occupies 1214-1470 (YKIWRIVVST…DNFDYLTRDS (257 aa)). A helical transmembrane segment spans residues 1222 to 1250 (STPFEYFIMGLIVLNTVLLMMKFHRQSDA). Over 1251–1255 (YKNTL) the chain is Extracellular. Residues 1256–1275 (KYMNMCFTGMFTVECILKIA) traverse the membrane as a helical segment. At 1276 to 1283 (AFGVRNFF) the chain is on the cytoplasmic side. The chain crosses the membrane as a helical span at residues 1284–1302 (KDAWNTFDFITVIGSIVDA). Residues 1303-1309 (LVIEFGE) are Extracellular-facing. Residues 1310-1328 (NFINVGFLRLFRAARLIKL) traverse the membrane as a helical segment. Over 1329–1347 (LRQGYTIRILLWTFVQSFK) the chain is Cytoplasmic. Residues 1348–1367 (ALPYVCLLIAMLFFIYAIIG) form a helical membrane-spanning segment. The Extracellular portion of the chain corresponds to 1368-1431 (MQVFGNIALD…AKAGKQEGGC (64 aa)). The tract at residues 1430-1471 (GCGSNIAYAYFVSFIFFCSFLMLNLFVAVIMDNFDYLTRDSS) is phenylalkylamine binding. A helical transmembrane segment spans residues 1432–1456 (GSNIAYAYFVSFIFFCSFLMLNLFV). Topologically, residues 1457 to 1904 (AVIMDNFDYL…HSDSDEDDWC (448 aa)) are cytoplasmic. Residues 1476–1511 (HHLDEFVRIWAEYDPNATGKIHYTEMYDMLKNMDPP) enclose the EF-hand domain. Ca(2+)-binding residues include D1489, N1491, T1493, K1495, and E1500. Disordered stretches follow at residues 1652–1694 (THTG…HEGP), 1710–1788 (THHP…HSYP), and 1870–1904 (GGRL…DDWC). Over residues 1670-1681 (RSPSLRHSPGRP) the composition is skewed to low complexity. Residues 1682 to 1691 (GYDHHGHYYH) show a composition bias toward basic and acidic residues. The segment covering 1710–1725 (THHPHPSQYNHRHRMR) has biased composition (basic residues). Residues 1727–1740 (PWSASTSPARTPSP) show a composition bias toward low complexity. Polar residues predominate over residues 1751–1762 (GTTSLEQRSRSP). Residues 1771-1784 (PHTHQHYHRHHPHQ) are compositionally biased toward basic residues.

It belongs to the calcium channel alpha-1 subunit (TC 1.A.1.11) family. CACNA1I subfamily. Interacts with CATSPER1 and CATSPER2, leading to suppress T-type calcium channel activity.

The protein localises to the membrane. Functionally, voltage-sensitive calcium channels (VSCC) mediate the entry of calcium ions into excitable cells and are also involved in a variety of calcium-dependent processes, including muscle contraction, neurotransmitter release, gene expression, cell motility, cell division and cell death. The protein is Voltage-dependent calcium channel type A subunit alpha-1 (CAC) of Apis mellifera (Honeybee).